We begin with the raw amino-acid sequence, 282 residues long: Pantothenate synthetase (282 aa).

26-33 (MGNLHEGH) serves as a coordination point for ATP. Residue His33 is the Proton donor of the active site. A (R)-pantoate-binding site is contributed by Gln57. Gln57 is a beta-alanine binding site. 144 to 147 (GKKD) lines the ATP pocket. Residue Gln150 participates in (R)-pantoate binding. ATP-binding positions include Val173 and 181–184 (LSSR).

This sequence belongs to the pantothenate synthetase family. In terms of assembly, homodimer.

The protein resides in the cytoplasm. It carries out the reaction (R)-pantoate + beta-alanine + ATP = (R)-pantothenate + AMP + diphosphate + H(+). Its pathway is cofactor biosynthesis; (R)-pantothenate biosynthesis; (R)-pantothenate from (R)-pantoate and beta-alanine: step 1/1. Its function is as follows. Catalyzes the condensation of pantoate with beta-alanine in an ATP-dependent reaction via a pantoyl-adenylate intermediate. In Cupriavidus taiwanensis (strain DSM 17343 / BCRC 17206 / CCUG 44338 / CIP 107171 / LMG 19424 / R1) (Ralstonia taiwanensis (strain LMG 19424)), this protein is Pantothenate synthetase.